The sequence spans 350 residues: UDP-N-acetylglucosamine--N-acetylmuramyl-(pentapeptide) pyrophosphoryl-undecaprenol N-acetylglucosamine transferase (350 aa).

Residues 9-11 (TGG), Asn123, Arg159, Ser181, and Gln281 each bind UDP-N-acetyl-alpha-D-glucosamine.

It belongs to the glycosyltransferase 28 family. MurG subfamily.

The protein localises to the cell inner membrane. The enzyme catalyses di-trans,octa-cis-undecaprenyl diphospho-N-acetyl-alpha-D-muramoyl-L-alanyl-D-glutamyl-meso-2,6-diaminopimeloyl-D-alanyl-D-alanine + UDP-N-acetyl-alpha-D-glucosamine = di-trans,octa-cis-undecaprenyl diphospho-[N-acetyl-alpha-D-glucosaminyl-(1-&gt;4)]-N-acetyl-alpha-D-muramoyl-L-alanyl-D-glutamyl-meso-2,6-diaminopimeloyl-D-alanyl-D-alanine + UDP + H(+). The protein operates within cell wall biogenesis; peptidoglycan biosynthesis. Cell wall formation. Catalyzes the transfer of a GlcNAc subunit on undecaprenyl-pyrophosphoryl-MurNAc-pentapeptide (lipid intermediate I) to form undecaprenyl-pyrophosphoryl-MurNAc-(pentapeptide)GlcNAc (lipid intermediate II). This is UDP-N-acetylglucosamine--N-acetylmuramyl-(pentapeptide) pyrophosphoryl-undecaprenol N-acetylglucosamine transferase from Helicobacter hepaticus (strain ATCC 51449 / 3B1).